A 1770-amino-acid polypeptide reads, in one-letter code: AF4/FMR2 family member lilli (1770 aa).

3 stretches are compositionally biased toward low complexity: residues 1-19 (MAQQ…HPHQ), 154-204 (LGHS…YLKQ), and 227-269 (PSSS…GTTP). 6 disordered regions span residues 1–28 (MAQQ…NQLQ), 134–327 (SRHA…EKDI), 402–660 (TSLL…PGNV), 761–805 (LHSA…LQLP), 822–1173 (MQKA…KQGQ), and 1291–1390 (KHEH…QISK). The span at 402-414 (TSLLTTPPHASQG) shows a compositional bias: polar residues. Positions 434 to 447 (KAAAALSPTAAAKP) are enriched in low complexity. Residues 448-461 (LKTEKNHTLEKQDS) are compositionally biased toward basic and acidic residues. The span at 463–474 (LENDLELSESED) shows a compositional bias: acidic residues. Ser-470 and Ser-472 each carry phosphoserine. The span at 483–503 (SAGNSSNSSESDSSESGSESS) shows a compositional bias: low complexity. A compositionally biased stretch (basic residues) spans 511–520 (QHHHHNHHHQ). Over residues 521–552 (QQQQQLQQQQQQQLLQQKQQHQQILQQQQRQL) the composition is skewed to low complexity. Positions 582–614 (FGSGGAGNGGCSTASSGGGGGGSGSGGGSGSSS) are enriched in gly residues. The span at 615 to 625 (GIGTMSSGSSS) shows a compositional bias: low complexity. 2 stretches are compositionally biased toward polar residues: residues 626-638 (NKTP…NKWT) and 647-659 (ANQT…SPGN). Residues 768–800 (SDSGTSGSGSTSSSSSSSDSAPGEVVPMPGPGE) show a composition bias toward low complexity. Positions 844 to 854 (QRQKKPRKKKP) are enriched in basic residues. A phosphoserine mark is found at Ser-863 and Ser-864. Low complexity-rich tracts occupy residues 880–893 (AAAA…ATAT), 909–928 (QQQS…SSSQ), 994–1028 (ANAS…SSSS), 1071–1081 (SGSSSPSSSSS), and 1111–1131 (SQHS…SSTS). A DNA-binding region (a.T hook) is located at residues 900–912 (KKGRGRPRKQQQS). 2 positions are modified to phosphoserine: Ser-920 and Ser-922. Basic and acidic residues-rich tracts occupy residues 1295–1312 (PHPV…ESKF) and 1321–1355 (FQLK…EREQ). Ser-1442 bears the Phosphoserine mark. Low complexity-rich tracts occupy residues 1483–1499 (AAAT…TSTA) and 1656–1676 (GNTP…SGSN). 2 disordered regions span residues 1483-1502 (AAAT…APPA) and 1656-1683 (GNTP…GKIV).

The protein belongs to the AF4 family.

It localises to the nucleus. Functionally, has a role in transcriptional regulation. Acts in parallel with the Ras/MAPK and the PI3K/PKB pathways in the control of cell identity and cellular growth. Essential for regulation of the cytoskeleton and cell growth but not for cell proliferation or growth rate. Required specifically for the microtubule-based basal transport of lipid droplets. Plays a partially redundant function downstream of Raf in cell fate specification in the developing eye. Pair-rule protein that regulates embryonic cellularization, gastrulation and segmentation. This chain is AF4/FMR2 family member lilli, found in Drosophila pseudoobscura pseudoobscura (Fruit fly).